The following is a 564-amino-acid chain: Alpha-amylase 3 (564 aa).

The N-terminal stretch at 1-21 is a signal peptide; it reads MFGVYFVLLFLSSALIHVANA. Cysteine 51 and cysteine 59 are oxidised to a cystine. 2 residues coordinate substrate: asparagine 56 and tryptophan 105. Asparagine 143 contributes to the Ca(2+) binding site. Cysteine 172 and cysteine 188 are disulfide-bonded. The N-linked (GlcNAc...) asparagine glycan is linked to asparagine 181. Aspartate 198 contributes to the Ca(2+) binding site. A substrate-binding site is contributed by arginine 227. Residue aspartate 229 participates in Ca(2+) binding. Catalysis depends on aspartate 229, which acts as the Nucleophile. 232–233 provides a ligand contact to substrate; sequence KM. Asparagine 235 carries N-linked (GlcNAc...) asparagine glycosylation. A Ca(2+)-binding site is contributed by glutamate 253. The active-site Proton donor is glutamate 253. Cysteine 263 and cysteine 306 are oxidised to a cystine. 2 N-linked (GlcNAc...) asparagine glycosylation sites follow: asparagine 282 and asparagine 305. Substrate is bound by residues aspartate 322 and arginine 369. Residues asparagine 438, asparagine 447, and asparagine 498 are each glycosylated (N-linked (GlcNAc...) asparagine). Serine 538 carries GPI-anchor amidated serine lipidation. Residues 539-564 constitute a propeptide, removed in mature form; that stretch reads SSRLILSFKTLVFGLGVTAMLFVLFF.

This sequence belongs to the glycosyl hydrolase 13 family. The cofactor is Ca(2+). In terms of processing, N-glycosylated.

The protein localises to the cell membrane. The catalysed reaction is Endohydrolysis of (1-&gt;4)-alpha-D-glucosidic linkages in polysaccharides containing three or more (1-&gt;4)-alpha-linked D-glucose units.. Has a role in cell wall biosynthesis where it is involved in maintaining cell wall strength and shape. The polypeptide is Alpha-amylase 3 (aah3) (Schizosaccharomyces pombe (strain 972 / ATCC 24843) (Fission yeast)).